A 179-amino-acid chain; its full sequence is Large ribosomal subunit protein uL5 (179 aa).

This sequence belongs to the universal ribosomal protein uL5 family. As to quaternary structure, part of the 50S ribosomal subunit; part of the 5S rRNA/L5/L18/L25 subcomplex. Contacts the 5S rRNA and the P site tRNA. Forms a bridge to the 30S subunit in the 70S ribosome.

In terms of biological role, this is one of the proteins that bind and probably mediate the attachment of the 5S RNA into the large ribosomal subunit, where it forms part of the central protuberance. In the 70S ribosome it contacts protein S13 of the 30S subunit (bridge B1b), connecting the 2 subunits; this bridge is implicated in subunit movement. Contacts the P site tRNA; the 5S rRNA and some of its associated proteins might help stabilize positioning of ribosome-bound tRNAs. The polypeptide is Large ribosomal subunit protein uL5 (Geobacillus sp. (strain WCH70)).